The chain runs to 195 residues: TM2 domain-containing protein C41D11.9 (195 aa).

An N-terminal signal peptide occupies residues 1–20; that stretch reads MLHKILFLICLASFIPTIGS. Residues 21–136 lie on the Extracellular side of the membrane; sequence ISGTKDVKSK…NWSSGYSWTK (116 aa). N-linked (GlcNAc...) asparagine glycans are attached at residues Asn55, Asn93, and Asn127. Positions 131 to 179 constitute a TM2 domain; it reads GYSWTKTMILSVVLGGFGADRFYLGLWKSAIGKLFSFGGLGVWTLVDVV. The chain crosses the membrane as a helical span at residues 137–157; it reads TMILSVVLGGFGADRFYLGLW. The Cytoplasmic portion of the chain corresponds to 158-163; it reads KSAIGK. The helical transmembrane segment at 164-184 threads the bilayer; that stretch reads LFSFGGLGVWTLVDVVLIAVG. The Extracellular portion of the chain corresponds to 185 to 195; sequence YIKPYDGSMYI.

It belongs to the TM2 family.

It localises to the membrane. In Caenorhabditis elegans, this protein is TM2 domain-containing protein C41D11.9.